The sequence spans 408 residues: Protein ZNF365 (408 aa).

Ser16 carries the phosphoserine modification. A C2H2-type; degenerate zinc finger spans residues 26–51 (FRCPRCGDHTRFRSLSSLRAHLEFSH). Ser139 and Ser146 each carry phosphoserine. The stretch at 170–298 (VEAVDRTIEK…QLEYYQSQQA (129 aa)) forms a coiled coil. Phosphothreonine is present on Thr176. Position 370 is a phosphoserine (Ser370).

In terms of assembly, homodimer. Interacts with NDE1 and NDEL1. Interacts with DISC1. Interacts with PARP1. Interacts with MCRS1. Detected in several tissues, with highest levels in brain. Also expressed during embryonic development. Expressed in cerebral cortex, hippocampus, striatum, inferior colliculus and thalamus.

It localises to the cytoplasm. Its subcellular location is the cytoskeleton. The protein localises to the microtubule organizing center. It is found in the centrosome. Contributes to genomic stability by preventing telomere dysfunction. Involved in the morphogenesis of basket cells in the somatosensory cortex during embryogenesis. Involved in the positive regulation of oligodendrocyte differentiation during postnatal growth. Involved in dendritic arborization, morphogenesis of spine density dendrite, and establishment of postsynaptic dendrite density in cortical pyramidal neurons. Involved in the regulation of neurogenesis. Negatively regulates neurite outgrowth. Involved in homologous recombination (HR) repair pathway. Required for proper resolution of DNA double-strand breaks (DSBs) by HR. Is required for recovery of stalled replication forks, and directly contributes to genomic stability. Interacts with PARP1 and mediates MRE11-dependent DNA end resection during replication fork recovery. This chain is Protein ZNF365 (Znf365), found in Mus musculus (Mouse).